A 533-amino-acid polypeptide reads, in one-letter code: Na(+)/H(+) antiporter NhaB (533 aa).

11 helical membrane-spanning segments follow: residues 10 to 30 (IGNFLGNSPKWYKIAILSFLI), 67 to 87 (PGGLLAIEAVAIGMTSASQVL), 96 to 116 (VLLLLVFMVAGIYFMKQLLLF), 131 to 165 (VSLLFCLASAFLSAFLDALTVIAVIITVAVGFYSI), 209 to 229 (LLMHAGVGTALGGVCTMVGEP), 247 to 267 (IRMSPVTVPVFIAGILTCYIV), 310 to 330 (AFIGVWLIAGLALHLASVGLI), 355 to 375 (EEALPFTALLAVFFSVVAVII), 396 to 416 (LVIFYIANGLLSMVSDNVFVG), 454 to 474 (ATPNGQAAFLFLLTSALAPLI), and 485 to 505 (ALPYTIVLSIVGVMAIQIGFL).

The protein belongs to the NhaB Na(+)/H(+) (TC 2.A.34) antiporter family.

It is found in the cell inner membrane. It catalyses the reaction 2 Na(+)(in) + 3 H(+)(out) = 2 Na(+)(out) + 3 H(+)(in). Functionally, na(+)/H(+) antiporter that extrudes sodium in exchange for external protons. The protein is Na(+)/H(+) antiporter NhaB of Shewanella oneidensis (strain ATCC 700550 / JCM 31522 / CIP 106686 / LMG 19005 / NCIMB 14063 / MR-1).